Here is a 76-residue protein sequence, read N- to C-terminus: Attractin (76 aa).

The N-terminal stretch at 1–18 (MKVAIIILSLALVAAVFA) is a signal peptide. 3 disulfide bridges follow: C22-C59, C31-C51, and C38-C44. N26 carries N-linked (GlcNAc...) asparagine glycosylation.

Binds to temptin and enticin. Produced by the albumen gland of the egg cordons.

It localises to the secreted. In terms of biological role, water-borne pheromone that attract the marine mollusk Aplysia into breeding aggregations and coordinate male and female reproductive behavior within the aggregation. This is Attractin (ATT) from Aplysia californica (California sea hare).